The sequence spans 428 residues: Cytochrome c biogenesis protein CcsB (428 aa).

3 helical membrane-spanning segments follow: residues 14-34, 72-92, and 162-182; these read LRFA…GTFI, SIWF…CSFR, and IGPL…AYGS.

Belongs to the Ccs1/CcsB family. In terms of assembly, may interact with CcsA.

Its subcellular location is the cellular thylakoid membrane. Functionally, required during biogenesis of c-type cytochromes (cytochrome c6 and cytochrome f) at the step of heme attachment. In Prochlorococcus marinus (strain MIT 9312), this protein is Cytochrome c biogenesis protein CcsB.